Consider the following 726-residue polypeptide: Sister chromatid cohesion protein SCC4 (726 aa).

TPR repeat units follow at residues 7-40 (AEGL…QISF), 88-121 (FQNY…ASSV), 132-165 (CNFN…ASHI), 229-262 (RLRL…IQQL), 443-477 (PTIL…CIEA), 531-564 (ASIL…AHNH), and 572-605 (AQYL…AKKL). Residues 697–726 (SVGIEGPSPAPSSSRLVGLDTGKRWGKRRM) are disordered.

Belongs to the SCC4/mau-2 family. Interacts with SCC2 to form the cohesin loading complex. Expressed ubiquitously.

It is found in the nucleus. The protein resides in the cytoplasm. In terms of biological role, essential protein required for cell fate determination during embryogenesis. Involved in sister chromatid cohesion. Forms a complex with SCC2, which is required for the association of the cohesin complex with chromosomes. The protein is Sister chromatid cohesion protein SCC4 of Arabidopsis thaliana (Mouse-ear cress).